The sequence spans 150 residues: MNTCIQLLILCLVTVINSENSTDNSTENTIKNETENATETELPETFENETENVSETELPEIIENETKIEALNLPQIPKQKYCRTEGQYCSRTYFHRCCGNLVCQLHGFFNGTCVQCLAERKFCIWSSECCSKRCRLFRCRKNPYVQVIPY.

Positions 1–18 (MNTCIQLLILCLVTVINS) are cleaved as a signal peptide. N-linked (GlcNAc...) asparagine glycosylation is found at N20, N24, N32, N36, N48, N52, N64, and N110. The interval 22-49 (TDNSTENTIKNETENATETELPETFENE) is disordered. Over residues 36–49 (NATETELPETFENE) the composition is skewed to acidic residues. Cystine bridges form between C116-C130, C123-C134, and C129-C139.

It belongs to the UPF0506 family.

Its subcellular location is the secreted. This chain is UPF0506 protein SJCHGC02381, found in Schistosoma japonicum (Blood fluke).